The chain runs to 57 residues: Potassium channel toxin alpha-KTx 8.5 (57 aa).

The signal sequence occupies residues 1 to 28 (MSRLYAIILIALVLNVIMTIMPDSKVEA). 3 disulfides stabilise this stretch: Cys-31-Cys-47, Cys-34-Cys-52, and Cys-38-Cys-54.

It belongs to the short scorpion toxin superfamily. Potassium channel inhibitor family. Alpha-KTx 08 subfamily. As to expression, expressed by the venom gland.

The protein resides in the secreted. Selectively inhibits voltage-gated potassium channels Kv1.2/KCNA2 (IC(50)=183 nM). In Odontobuthus doriae (Yellow Iranian scorpion), this protein is Potassium channel toxin alpha-KTx 8.5.